Here is a 355-residue protein sequence, read N- to C-terminus: 3-isopropylmalate dehydrogenase (355 aa).

Position 77 to 90 (77 to 90) interacts with NAD(+); sequence GAKWDNLPREKRPE. The substrate site is built by arginine 97, arginine 107, arginine 135, and aspartate 220. 3 residues coordinate Mg(2+): aspartate 220, aspartate 244, and aspartate 248. 277–289 is an NAD(+) binding site; that stretch reads GSAPDIAGQGIAN.

The protein belongs to the isocitrate and isopropylmalate dehydrogenases family. LeuB type 1 subfamily. As to quaternary structure, homodimer. Mg(2+) serves as cofactor. Mn(2+) is required as a cofactor.

Its subcellular location is the cytoplasm. It catalyses the reaction (2R,3S)-3-isopropylmalate + NAD(+) = 4-methyl-2-oxopentanoate + CO2 + NADH. Its pathway is amino-acid biosynthesis; L-leucine biosynthesis; L-leucine from 3-methyl-2-oxobutanoate: step 3/4. Functionally, catalyzes the oxidation of 3-carboxy-2-hydroxy-4-methylpentanoate (3-isopropylmalate) to 3-carboxy-4-methyl-2-oxopentanoate. The product decarboxylates to 4-methyl-2 oxopentanoate. The sequence is that of 3-isopropylmalate dehydrogenase from Sulfurimonas denitrificans (strain ATCC 33889 / DSM 1251) (Thiomicrospira denitrificans (strain ATCC 33889 / DSM 1251)).